The following is a 602-amino-acid chain: Zinc finger protein 652-B (602 aa).

The interval 60-232 (FQDSKPTNEV…PSDKAKSEEK (173 aa)) is disordered. The span at 65–79 (PTNEVHAVKGERENS) shows a compositional bias: basic and acidic residues. Acidic residues-rich tracts occupy residues 80–108 (GESE…DEDE) and 148–167 (DDEG…DEEN). Basic and acidic residues predominate over residues 222–232 (SPSDKAKSEEK). The C2H2-type 1 zinc finger occupies 235–258 (LTCDKCPRVFNTRWYLEKHMNVTH). The C2H2-type 2; degenerate zinc finger occupies 262-284 (QICDKCGKKFVLESELSLHLQTD). C2H2-type zinc fingers lie at residues 289–312 (IQCI…KIVH), 319–341 (FSCE…LVAH), 347–369 (FTCE…SLQH), 375–397 (FRCE…MSIH), 403–425 (FMCQ…MKTH), and 431–453 (FICE…RRTH). The C2H2-type 9; degenerate zinc-finger motif lies at 459 to 482 (YPCDVCGMRFRFSNMLKAHKEKCF). The disordered stretch occupies residues 543–575 (PFSHLHLHPHSHTHHLAVPPVPHLPPPPALFKS). Basic residues predominate over residues 545-557 (SHLHLHPHSHTHH). Positions 561–571 (PPVPHLPPPPA) are enriched in pro residues.

It belongs to the krueppel C2H2-type zinc-finger protein family.

The protein resides in the nucleus. May be involved in transcriptional regulation. In Xenopus laevis (African clawed frog), this protein is Zinc finger protein 652-B (znf652-b).